The following is a 372-amino-acid chain: Tomoregulin-1 (372 aa).

Positions 1–36 are cleaved as a signal peptide; sequence MGAQAPLRLPAAPPLAVCGYTSVLLLFAFCLPGSRA. Residues 37 to 322 are Extracellular-facing; that stretch reads SNQPAGGGGD…VPSRQKLTHV (286 aa). N-linked (GlcNAc...) asparagine glycosylation is present at asparagine 55. The 48-residue stretch at 90–137 folds into the Kazal-like 1 domain; that stretch reads ACQFQCHTNYIPVCGSNGDTYQNECFLRRAACKHQKDITVVARGPCYS. 3 disulfides stabilise this stretch: cysteine 91/cysteine 121, cysteine 95/cysteine 114, and cysteine 103/cysteine 135. Asparagine 139 carries an N-linked (GlcNAc...) asparagine glycan. A disordered region spans residues 139–161; it reads NGSGSGEGEEEGSGAGAHRKHSK. In terms of domain architecture, Kazal-like 2 spans 181–229; it reads VCNIDCSGYSFNPVCASDGSSYNNPCFVREASCIKQEQIDIRHLGHCTD. 6 cysteine pairs are disulfide-bonded: cysteine 182–cysteine 213, cysteine 186–cysteine 206, cysteine 195–cysteine 227, cysteine 267–cysteine 280, cysteine 275–cysteine 291, and cysteine 293–cysteine 302. An EGF-like domain is found at 263-303; the sequence is SHMPCPENLNGYCIHGKCEFIYSTQKASCRCESGYTGQHCE. A helical transmembrane segment spans residues 323–343; sequence LIAAIIGAVQIAIIVAIVMCI. Over 344–372 the chain is Cytoplasmic; the sequence is TRKCPKNNRGRRQKQNLGHFTSDTSSRMV. The interval 351–372 is disordered; sequence NRGRRQKQNLGHFTSDTSSRMV. Residues 358-372 show a composition bias toward polar residues; the sequence is QNLGHFTSDTSSRMV.

The protein belongs to the tomoregulin family. In terms of assembly, may interact with ST14. Maily expressed in neurons. Expressed in brain, neurointermediate lobe, pars distalis, pancreas, ovary and testis.

It is found in the cell membrane. Neuron-specific restriction factor that prevents herpes simplex virus 1 (HHV-1) infection in the brain by blocking viral entry. Also able to restrict herpes simplex virus 2 (HHV-2) infection, although to a lesser extent. Acts by preventing the association between the viral glycoprotein D (gD) and its cell surface receptor NECTIN1, thereby inhibiting fusion of the virus and the cell membrane. Also able to prevent the association between the viral glycoprotein B (gB) and MYH9/NMMHC-IIA and MYH10/NMMHC-IIB receptors. This is Tomoregulin-1 from Mus musculus (Mouse).